Here is a 121-residue protein sequence, read N- to C-terminus: Putative iron-sulfur cluster insertion protein ErpA (121 aa).

Residues C49, C113, and C115 each contribute to the iron-sulfur cluster site.

The protein belongs to the HesB/IscA family. In terms of assembly, homodimer. It depends on iron-sulfur cluster as a cofactor.

Its function is as follows. Required for insertion of 4Fe-4S clusters. The protein is Putative iron-sulfur cluster insertion protein ErpA of Methylibium petroleiphilum (strain ATCC BAA-1232 / LMG 22953 / PM1).